The primary structure comprises 310 residues: MTTANQPICPSPAKWPSPAKLNLFLYITGQRADGYHQLQTLFQFLDYGDQLTIEPRDDNQIRLLTPIAGVENEQNLIVRAAKMLQKHPGNTPVPRGADISIDKCLPMGGGLGGGSSNAATVLVALNLLWQCGLTDEQLADLGLTLGADVPVFVRGHAAFAEGIGEKLQPAEPVEKWYLVIHPGVNIPTPIIFSDPELKRNTPIRPLAALLSTPYANDCEPIARKRFREVEQALSWLLEYAPSRLTGTGACVFAEFDTESSARQVLSIAPEWLHGFVARGVNVSPLHRVRSGKKLKAVSADNDLQRYVRSK.

The active site involves Lys-20. 106-116 contacts ATP; that stretch reads PMGGGLGGGSS. The active site involves Asp-148.

This sequence belongs to the GHMP kinase family. IspE subfamily. As to quaternary structure, homodimer.

The catalysed reaction is 4-CDP-2-C-methyl-D-erythritol + ATP = 4-CDP-2-C-methyl-D-erythritol 2-phosphate + ADP + H(+). It participates in isoprenoid biosynthesis; isopentenyl diphosphate biosynthesis via DXP pathway; isopentenyl diphosphate from 1-deoxy-D-xylulose 5-phosphate: step 3/6. Catalyzes the phosphorylation of the position 2 hydroxy group of 4-diphosphocytidyl-2C-methyl-D-erythritol. This chain is 4-diphosphocytidyl-2-C-methyl-D-erythritol kinase, found in Yersinia pseudotuberculosis serotype O:3 (strain YPIII).